We begin with the raw amino-acid sequence, 101 residues long: Small ribosomal subunit protein uS14 (101 aa).

Belongs to the universal ribosomal protein uS14 family. As to quaternary structure, part of the 30S ribosomal subunit. Contacts proteins S3 and S10.

In terms of biological role, binds 16S rRNA, required for the assembly of 30S particles and may also be responsible for determining the conformation of the 16S rRNA at the A site. The polypeptide is Small ribosomal subunit protein uS14 (Francisella tularensis subsp. tularensis (strain FSC 198)).